Reading from the N-terminus, the 155-residue chain is Transcriptional regulator MraZ (155 aa).

2 consecutive SpoVT-AbrB domains span residues 15-62 (TYEN…GMDR) and 93-136 (SEEL…NPTA).

This sequence belongs to the MraZ family. Forms oligomers.

The protein localises to the cytoplasm. Its subcellular location is the nucleoid. This chain is Transcriptional regulator MraZ, found in Rhodospirillum rubrum (strain ATCC 11170 / ATH 1.1.1 / DSM 467 / LMG 4362 / NCIMB 8255 / S1).